Consider the following 335-residue polypeptide: UPF0284 protein TON_0688 (335 aa).

Belongs to the UPF0284 family.

This Thermococcus onnurineus (strain NA1) protein is UPF0284 protein TON_0688.